The primary structure comprises 238 residues: Ribonuclease PH (238 aa).

Phosphate contacts are provided by residues Arg86 and 124–126 (GTR).

Belongs to the RNase PH family. As to quaternary structure, homohexameric ring arranged as a trimer of dimers.

It carries out the reaction tRNA(n+1) + phosphate = tRNA(n) + a ribonucleoside 5'-diphosphate. Phosphorolytic 3'-5' exoribonuclease that plays an important role in tRNA 3'-end maturation. Removes nucleotide residues following the 3'-CCA terminus of tRNAs; can also add nucleotides to the ends of RNA molecules by using nucleoside diphosphates as substrates, but this may not be physiologically important. Probably plays a role in initiation of 16S rRNA degradation (leading to ribosome degradation) during starvation. The sequence is that of Ribonuclease PH from Vibrio atlanticus (strain LGP32) (Vibrio splendidus (strain Mel32)).